The following is a 131-amino-acid chain: Profilin-3 (131 aa).

A disulfide bridge links C13 with C115. The Involved in PIP2 interaction motif lies at 81-97 (AVIRGKKGAGGITIKKT). T111 is subject to Phosphothreonine.

The protein belongs to the profilin family. As to quaternary structure, occurs in many kinds of cells as a complex with monomeric actin in a 1:1 ratio. In terms of processing, phosphorylated by MAP kinases.

The protein resides in the cytoplasm. It is found in the cytoskeleton. In terms of biological role, binds to actin and affects the structure of the cytoskeleton. At high concentrations, profilin prevents the polymerization of actin, whereas it enhances it at low concentrations. The polypeptide is Profilin-3 (Olea europaea (Common olive)).